We begin with the raw amino-acid sequence, 198 residues long: Copy number protein (198 aa).

Its subcellular location is the cell membrane. Involved in copy number control of pIP404. This basic and hydrophobic protein may exert its effect from the cytoplasmic membrane. The sequence is that of Copy number protein (cop) from Clostridium perfringens.